A 121-amino-acid chain; its full sequence is MSQQLTYSSKINKIRTFALILVFAGIITMYGGILTKNIEWLMVIFFILGTLMVILSCAVYVWIGTLSLRAVPVICPSCEKPTKMLGRVDACMHCKQPLTMDKNLEGIEFDEKYNSRKYKKK.

2 helical membrane passes run 14 to 34 (IRTFALILVFAGIITMYGGIL) and 43 to 63 (VIFFILGTLMVILSCAVYVWI).

The protein belongs to the UPF0295 family.

The protein localises to the cell membrane. In Oceanobacillus iheyensis (strain DSM 14371 / CIP 107618 / JCM 11309 / KCTC 3954 / HTE831), this protein is UPF0295 protein OB0906.